Here is a 134-residue protein sequence, read N- to C-terminus: Homeobox protein ceh-5 (134 aa).

Residues 35 to 94 constitute a DNA-binding region (homeobox); sequence PKRPRTVFTDEQLEKLEESFNTSGYLSGSTRAKLAESLGLSDNQVKVWFQNRRTKQKKID.

It is found in the nucleus. The polypeptide is Homeobox protein ceh-5 (ceh-5) (Caenorhabditis elegans).